We begin with the raw amino-acid sequence, 295 residues long: Iodotyrosine deiodinase (295 aa).

The helical transmembrane segment at 3-23 (VFSSLTPVFVAVLCVIIGFLF) threads the bilayer. The interval 29-81 (KESRSKQKPSDQTARPWVDEDLQDDTEISTKDNEENNEDWMDTTDEENLPHVP) is disordered. Residues 63–75 (ENNEDWMDTTDEE) are compositionally biased toward acidic residues. FMN-binding positions include 106–110 (RRSVR), Ser134, and 134–135 (SG). Residues Ala136, Glu163, Tyr167, and Lys188 each coordinate 3-iodo-L-tyrosine. Residues 243–245 (TTT) and Arg285 each bind FMN.

This sequence belongs to the nitroreductase family. The cofactor is FMN.

It localises to the membrane. It carries out the reaction 2 iodide + L-tyrosine + 2 NADP(+) = 3,5-diiodo-L-tyrosine + 2 NADPH + H(+). The enzyme catalyses iodide + L-tyrosine + NADP(+) = 3-iodo-L-tyrosine + NADPH. The catalysed reaction is 3-iodo-L-tyrosine + iodide + NADP(+) = 3,5-diiodo-L-tyrosine + NADPH + H(+). It catalyses the reaction L-tyrosine + chloride + NADP(+) = 3-chloro-L-tyrosine + NADPH. It carries out the reaction bromide + L-tyrosine + NADP(+) = 3-bromo-L-tyrosine + NADPH. Catalyzes the dehalogenation of halotyrosines such as 3,5-diiodo-L-tyrosine. Likely to also catalyze the dehalogenation of other halotyrosines such as 3-bromo-L-tyrosine, 3-chloro-L-tyrosine and 3-iodo-L-tyrosine. This chain is Iodotyrosine deiodinase (iyd), found in Danio rerio (Zebrafish).